We begin with the raw amino-acid sequence, 100 residues long: MAKCLLLLLLVVLSSLLGLPQALECFQCNRVNASGVCETGGSTCQTQGSQQCFLRRIFENGTLSYGHQGCSQLCIPMKLFNPSVIVEYKCCHDSPLCNKF.

The N-terminal stretch at 1-22 (MAKCLLLLLLVVLSSLLGLPQA) is a signal peptide. The UPAR/Ly6 domain maps to 23 to 100 (LECFQCNRVN…CHDSPLCNKF (78 aa)). Cystine bridges form between C25–C52, C28–C37, C44–C70, C74–C90, and C91–C97. A glycan (N-linked (GlcNAc...) asparagine) is linked at N60.

Glycosylated. In terms of tissue distribution, expressed in placenta, where it is detected in both fetal tissues (cotyledon and intercotyledon) and maternal tissues (caruncle and intercaruncular endometrium) (at protein level). Expressed in the mesenchyme area of villi in the cotyledon (at protein level). In endometrium, expressed in the luminal epithelium and weakly in the subluminal stroma (at protein level). Detected in trophoblast mononucleate cells (TMCs) (at protein level). Also detected in trophoblast binucleate cells (BNCs). Overall, expression is strongest in fetal tissue and lower in maternal tissue. Not detected in other tissues tested.

The protein localises to the secreted. Its function is as follows. Binds specifically to type I collagen. This chain is Secreted protein of Ly-6 domain 1, found in Bos taurus (Bovine).